The following is a 274-amino-acid chain: Penicillin-insensitive murein endopeptidase (274 aa).

Residues 1–19 form the signal peptide; sequence MNKTAIALLALLASSASLA. 3 cysteine pairs are disulfide-bonded: Cys-44/Cys-265, Cys-187/Cys-235, and Cys-216/Cys-223. 6 residues coordinate Zn(2+): His-110, His-113, Asp-120, Asp-147, His-150, and His-211. The tract at residues 227-274 is disordered; sequence PLPPPGDGCGAELQSWFEPPKPGTTKPEKKTPPPLPPSCQALLDEHVI.

The protein belongs to the peptidase M74 family. In terms of assembly, dimer. It depends on Zn(2+) as a cofactor.

It is found in the periplasm. Its function is as follows. Murein endopeptidase that cleaves the D-alanyl-meso-2,6-diamino-pimelyl amide bond that connects peptidoglycan strands. Likely plays a role in the removal of murein from the sacculus. The polypeptide is Penicillin-insensitive murein endopeptidase (Escherichia coli O17:K52:H18 (strain UMN026 / ExPEC)).